Reading from the N-terminus, the 468-residue chain is MSSGTLYDKVWDLHRVAELSGGSTQLLIGLHLIHEVTSPQAFVALEDKGLKVRCPERTVATVDHIVPTTNQARPFADPLAEEMLSTLERNCSKHGIVLNGIGSGRQGIVHVIAPELGLTQPGMTVACGDSHTSTHGAFGAIAFGIGTSQVRDVLASQSLAMNKLKVRRLWFDNQLSPGVFAKDLILHVIRSLGVKAGVGHAYEFAGPAIDALSMEERMTLCNMAIEGGARCGYVNPDQTTFDYLKGRPSVPSGGAWNRATRWWRSLASNADAVFDDELRFDAATISPTVTWGITPGQGIGVDEQVPTPEQLDPADRPIAEEAYRYMDLTPGQAIAGVPVDVCFIGSCTNGRLSDLKAAAAVARGRQVAAGIKAFVVPGSEQVARAAEAEGLDQVFRDAGFEWREPGCSMCLAMNPDRLEGRQISASSSNRNFKGRQGSASGRTLLMSPAMVAAAAVTGYVSDVRSLGD.

[4Fe-4S] cluster-binding residues include cysteine 347, cysteine 407, and cysteine 410.

Belongs to the aconitase/IPM isomerase family. LeuC type 1 subfamily. Heterodimer of LeuC and LeuD. The cofactor is [4Fe-4S] cluster.

The enzyme catalyses (2R,3S)-3-isopropylmalate = (2S)-2-isopropylmalate. It functions in the pathway amino-acid biosynthesis; L-leucine biosynthesis; L-leucine from 3-methyl-2-oxobutanoate: step 2/4. In terms of biological role, catalyzes the isomerization between 2-isopropylmalate and 3-isopropylmalate, via the formation of 2-isopropylmaleate. This chain is 3-isopropylmalate dehydratase large subunit, found in Synechococcus sp. (strain CC9311).